The sequence spans 249 residues: 5'-nucleotidase SurE (249 aa).

4 residues coordinate a divalent metal cation: Asp9, Asp10, Ser40, and Asn92.

Belongs to the SurE nucleotidase family. A divalent metal cation is required as a cofactor.

It is found in the cytoplasm. The enzyme catalyses a ribonucleoside 5'-phosphate + H2O = a ribonucleoside + phosphate. In terms of biological role, nucleotidase that shows phosphatase activity on nucleoside 5'-monophosphates. This Shewanella sp. (strain MR-4) protein is 5'-nucleotidase SurE.